A 250-amino-acid chain; its full sequence is N-acetylmuramoyl-L-alanine amidase CwlH (250 aa).

A signal peptide spans 1–44 (MVTIKKDFIPVSNDNRPGYAMAPAYITVHNTANTAKGADAKMHA). In terms of domain architecture, N-acetylmuramoyl-L-alanine amidase spans 45-141 (KFVKNPNTSE…KKWSGKECPR (97 aa)).

The protein belongs to the N-acetylmuramoyl-L-alanine amidase 2 family.

It localises to the secreted. The enzyme catalyses Hydrolyzes the link between N-acetylmuramoyl residues and L-amino acid residues in certain cell-wall glycopeptides.. Its function is as follows. Autolysins are involved in some important biological processes such as cell separation, cell-wall turnover, competence for genetic transformation, formation of the flagella and sporulation. Could play a role in mother cell lysis with CwlC. This is N-acetylmuramoyl-L-alanine amidase CwlH (cwlH) from Bacillus subtilis (strain 168).